A 293-amino-acid polypeptide reads, in one-letter code: Protein translocase subunit SecF (293 aa).

6 consecutive transmembrane segments (helical) span residues 10–30 (ARIF…SMFA), 130–150 (VKSA…YITI), 158–178 (LAAI…FSVL), 185–205 (SFVA…IVVF), 244–264 (LFAV…FSFA), and 267–287 (VGFC…WLFF).

This sequence belongs to the SecD/SecF family. SecF subfamily. As to quaternary structure, forms a complex with SecD. Part of the essential Sec protein translocation apparatus which comprises SecA, SecYEG and auxiliary proteins SecDF. Other proteins may also be involved.

The protein resides in the cell membrane. Functionally, part of the Sec protein translocase complex. Interacts with the SecYEG preprotein conducting channel. SecDF uses the proton motive force (PMF) to complete protein translocation after the ATP-dependent function of SecA. In Acidaminococcus fermentans (strain ATCC 25085 / DSM 20731 / CCUG 9996 / CIP 106432 / VR4), this protein is Protein translocase subunit SecF.